The sequence spans 355 residues: Elongation factor Ts (355 aa).

The interval 82 to 85 (TDFV) is involved in Mg(2+) ion dislocation from EF-Tu.

This sequence belongs to the EF-Ts family.

It localises to the cytoplasm. Associates with the EF-Tu.GDP complex and induces the exchange of GDP to GTP. It remains bound to the aminoacyl-tRNA.EF-Tu.GTP complex up to the GTP hydrolysis stage on the ribosome. This is Elongation factor Ts from Helicobacter pylori (strain HPAG1).